The primary structure comprises 162 residues: Ribosomal RNA large subunit methyltransferase H (162 aa).

S-adenosyl-L-methionine is bound by residues Leu-78, Gly-109, and 128-133 (LSALTL).

Belongs to the RNA methyltransferase RlmH family. As to quaternary structure, homodimer.

Its subcellular location is the cytoplasm. It catalyses the reaction pseudouridine(1915) in 23S rRNA + S-adenosyl-L-methionine = N(3)-methylpseudouridine(1915) in 23S rRNA + S-adenosyl-L-homocysteine + H(+). In terms of biological role, specifically methylates the pseudouridine at position 1915 (m3Psi1915) in 23S rRNA. This Psychrobacter cryohalolentis (strain ATCC BAA-1226 / DSM 17306 / VKM B-2378 / K5) protein is Ribosomal RNA large subunit methyltransferase H.